Reading from the N-terminus, the 339-residue chain is Transcription initiation factor IIB (339 aa).

The segment at 39-70 (EELICPVCGSKSIIKDYERAEIVCEMCGCVLQ) adopts a TFIIB-type zinc-finger fold. Cys43, Cys46, Cys62, and Cys65 together coordinate Zn(2+). 2 repeat units span residues 156-239 (SELD…SREL) and 250-331 (DYVP…ELTE).

This sequence belongs to the TFIIB family.

Functionally, stabilizes TBP binding to an archaeal box-A promoter. Also responsible for recruiting RNA polymerase II to the pre-initiation complex (DNA-TBP-TFIIB). The chain is Transcription initiation factor IIB from Methanococcus maripaludis (strain C5 / ATCC BAA-1333).